We begin with the raw amino-acid sequence, 166 residues long: Large ribosomal subunit protein uL10 (166 aa).

Belongs to the universal ribosomal protein uL10 family. Part of the ribosomal stalk of the 50S ribosomal subunit. The N-terminus interacts with L11 and the large rRNA to form the base of the stalk. The C-terminus forms an elongated spine to which L12 dimers bind in a sequential fashion forming a multimeric L10(L12)X complex.

Forms part of the ribosomal stalk, playing a central role in the interaction of the ribosome with GTP-bound translation factors. This chain is Large ribosomal subunit protein uL10, found in Streptococcus agalactiae serotype III (strain NEM316).